A 1023-amino-acid chain; its full sequence is MRAAGCGGTGVAALTTKLSRSISQHQPKSMPQASVNSEQNPSVPNSPSAHKPARSQSAQSAPSRAKWFVRFFRSVFGYRKTSLTFLVALVFAATLLLSWADSSLDFSVDMPTSKHEQAVLSRSWESLQKIARTKHTYTSEGNDEVHAYLEAHIASLVAKKPYMELDTDKNGTRRVMFDVKYLSYDSVSYYESNNLVVRVNGSDSSLPALLVSAHYDSVPTSYGVTDDGMGVASMLGLLEHYSSVAQPKRTIIFNFNNNEEFGLYGAQAFLAHPWFSQIAYFLNLEGTGAGGKAILFRGTDYGIVRHFSSVRFPFASSLFQQGFNNRLIHSETDYSVYIKAGLRGLDLAFYKPRDIYHTTRDSIQNTNIKSLWHMLSSSLDFVEHVSSQTIDLDEEVHAEAGKRDLALYTSFWNHFVVFSVSQVVSANIALLVVVPVASLLLLFIIFRCNKGWGFNFVNAIKYPLSLVASVLVLTFVSQVIIVPSNPFLVNSSIGLLVATLFSLFLLLNYIVLNGLNLVFKSFKGHQHDEKLIVMCESSFLTWILLLWSTVKLSHNKFGDDHTGELFIPILFSLQAVACFLGFLGWCFKPSKKVKVSREEHQPLLSSNGSNYGTQDDDDSLAPSSSLSLQSGFSENCEVHETKSFSYDWLVQFLVIVPISSLIIFNSGSLILNGLNKSIQESLSAQNLIYKFIQIFVIVWSIPFLPFIFKLNRIIVLALSLVLLYGFFAVNITDAFNDANPLKLRFLETISMDTSPPTNLVTVSARSMDVVKDILEDMPSLKDSKTELSIDSLGDGMSLYSYETPLIPHLVPGVKNLTDYLSIDVLKDSSSVSDSPFGLLTGELKINVPRNRNCKIDFNMSNTVIKVSDTKFMESKRSPVRTVIVYNEDKYENKSSSVIGAGVPEGFSRDSKGNSVFKDMDGISQLQLNKLNWDKPYHIGFQWVPEIVESESVWSEKIRTKKLGVNIECYWGDLDQLAEKDKAGNPVVQDRVPAFEELLHYSPSYVSWANRDRGMVSVTKYIEV.

Residues 1–80 are Cytoplasmic-facing; sequence MRAAGCGGTG…FFRSVFGYRK (80 aa). Over residues 17 to 48 the composition is skewed to polar residues; it reads KLSRSISQHQPKSMPQASVNSEQNPSVPNSPS. Residues 17 to 59 form a disordered region; sequence KLSRSISQHQPKSMPQASVNSEQNPSVPNSPSAHKPARSQSAQ. Residues 81–101 traverse the membrane as a helical segment; the sequence is TSLTFLVALVFAATLLLSWAD. Residues 102–425 lie on the Vacuolar side of the membrane; the sequence is SSLDFSVDMP…VVFSVSQVVS (324 aa). Residues Asn-170 and Asn-200 are each glycosylated (N-linked (GlcNAc...) asparagine). The Zn(2+) site is built by His-214 and Asp-226. The active-site Proton acceptor is the Glu-259. Zn(2+) contacts are provided by Glu-260, Glu-285, and His-357. Residues 426 to 446 traverse the membrane as a helical segment; the sequence is ANIALLVVVPVASLLLLFIIF. Residues 447–461 lie on the Cytoplasmic side of the membrane; it reads RCNKGWGFNFVNAIK. A helical membrane pass occupies residues 462–482; the sequence is YPLSLVASVLVLTFVSQVIIV. Over 483–491 the chain is Vacuolar; that stretch reads PSNPFLVNS. The N-linked (GlcNAc...) asparagine glycan is linked to Asn-490. A helical transmembrane segment spans residues 492–512; sequence SIGLLVATLFSLFLLLNYIVL. Residues 513–529 are Cytoplasmic-facing; that stretch reads NGLNLVFKSFKGHQHDE. The helical transmembrane segment at 530–550 threads the bilayer; it reads KLIVMCESSFLTWILLLWSTV. Residues 551 to 564 lie on the Vacuolar side of the membrane; it reads KLSHNKFGDDHTGE. Residues 565–585 traverse the membrane as a helical segment; sequence LFIPILFSLQAVACFLGFLGW. At 586–643 the chain is on the cytoplasmic side; sequence CFKPSKKVKVSREEHQPLLSSNGSNYGTQDDDDSLAPSSSLSLQSGFSENCEVHETKS. Residues 604–613 show a composition bias toward polar residues; the sequence is LSSNGSNYGT. The disordered stretch occupies residues 604–626; sequence LSSNGSNYGTQDDDDSLAPSSSL. Residues 644 to 664 traverse the membrane as a helical segment; that stretch reads FSYDWLVQFLVIVPISSLIIF. Residues 665 to 687 lie on the Vacuolar side of the membrane; it reads NSGSLILNGLNKSIQESLSAQNL. Asn-675 carries an N-linked (GlcNAc...) asparagine glycan. The chain crosses the membrane as a helical span at residues 688–708; sequence IYKFIQIFVIVWSIPFLPFIF. Residues 709 to 712 lie on the Cytoplasmic side of the membrane; it reads KLNR. The chain crosses the membrane as a helical span at residues 713 to 733; sequence IIVLALSLVLLYGFFAVNITD. Topologically, residues 734-1023 are vacuolar; sequence AFNDANPLKL…MVSVTKYIEV (290 aa). Residues Asn-815, Asn-858, and Asn-892 are each glycosylated (N-linked (GlcNAc...) asparagine).

Belongs to the peptidase M28 family. The cofactor is Zn(2+).

The protein localises to the vacuole membrane. Functionally, may be involved in vacuolar sorting and osmoregulation. This is Vacuolar membrane protease from Clavispora lusitaniae (strain ATCC 42720) (Yeast).